The chain runs to 492 residues: MLELRSCSNLVNSSRRLVPLVTYSGLSAITLPKSRFYSQPSALEVQGTSDSRSDNILDELKQRGLVSQVSQPESFLRTKLNGNDKIKLYCGVDPTAQSLHLGNLVPLMVLLHFYVKGHDIVTVIGGATGKVGDPSGRKTERDVMENDIRQSNVASISQQLQRFFKNGLEYYRNRCALTEDVPSGKYTPRNNFNWWKDIKMLDFLADFGRHIRVQSMLARDSISSRLQTKNGLGFNEFTYQVLQAYDFYHLYKEENVTIQVGGNDQWGNITAGIDLINRIQPIKNKGLPFGITVPLLTTATGEKFGKSAGNAVFIDPSINTAYDVYQFFYNTLDADVPKFLKIFTFLNSSEIKKIVETHIKSPSLRYGQTLLAKEVTDMLYGVGSGSDSEALSNIIFGRYDGTLSAAKLVDLCKKARILQYADREIDLIKLICKLVNCSVSEARRKLSQGSVYLHHSKSKVNENISNLAPFLIDDRVLILRIGKQKCFIIEMR.

Tyr-89 provides a ligand contact to L-tyrosine. Asp-93 contacts ATP. The 'HIGH' region motif lies at 94–103 (PTAQSLHLGN). 5 residues coordinate L-tyrosine: Asp-133, Tyr-239, Gln-243, Asp-246, and Gln-265. Residues 303–307 (KFGKS) carry the 'KMSKS' region motif. Lys-306 is an ATP binding site.

It belongs to the class-I aminoacyl-tRNA synthetase family. As to quaternary structure, homodimer.

The protein localises to the mitochondrion matrix. The enzyme catalyses tRNA(Tyr) + L-tyrosine + ATP = L-tyrosyl-tRNA(Tyr) + AMP + diphosphate + H(+). Functionally, catalyzes the attachment of tyrosine to tRNA(Tyr) in a two-step reaction: tyrosine is first activated by ATP to form Tyr-AMP and then transferred to the acceptor end of tRNA(Tyr). In Saccharomyces cerevisiae (strain ATCC 204508 / S288c) (Baker's yeast), this protein is Tyrosine--tRNA ligase, mitochondrial (MSY1).